The chain runs to 401 residues: Tyrosine--tRNA ligase (401 aa).

Positions 45 to 54 match the 'HIGH' region motif; that stretch reads PTAPDLHLGH. Residues 230–234 carry the 'KMSKS' region motif; that stretch reads KMSKS. Residue Lys-233 coordinates ATP. One can recognise an S4 RNA-binding domain in the interval 339-399; the sequence is IWLAKALVEC…GKRKFAKLKV (61 aa).

The protein belongs to the class-I aminoacyl-tRNA synthetase family. TyrS type 2 subfamily. As to quaternary structure, homodimer.

It localises to the cytoplasm. It carries out the reaction tRNA(Tyr) + L-tyrosine + ATP = L-tyrosyl-tRNA(Tyr) + AMP + diphosphate + H(+). Catalyzes the attachment of tyrosine to tRNA(Tyr) in a two-step reaction: tyrosine is first activated by ATP to form Tyr-AMP and then transferred to the acceptor end of tRNA(Tyr). The chain is Tyrosine--tRNA ligase from Campylobacter jejuni subsp. jejuni serotype O:2 (strain ATCC 700819 / NCTC 11168).